A 550-amino-acid chain; its full sequence is Glutamine--tRNA ligase (550 aa).

The 'HIGH' region signature appears at 34–44 (PEPNGYLHLGH). Residues 35–37 (EPN) and 41–47 (HLGHAKS) each bind ATP. Residues aspartate 67 and tyrosine 212 each contribute to the L-glutamine site. Residues threonine 231, 261-262 (RL), and 269-271 (LSK) contribute to the ATP site. The 'KMSKS' region signature appears at 268–272 (VLSKR).

The protein belongs to the class-I aminoacyl-tRNA synthetase family. Monomer.

Its subcellular location is the cytoplasm. The enzyme catalyses tRNA(Gln) + L-glutamine + ATP = L-glutaminyl-tRNA(Gln) + AMP + diphosphate. In Buchnera aphidicola subsp. Baizongia pistaciae (strain Bp), this protein is Glutamine--tRNA ligase.